We begin with the raw amino-acid sequence, 356 residues long: tRNA N6-adenosine threonylcarbamoyltransferase (356 aa).

Positions 115 and 119 each coordinate Fe cation. Residues 137 to 141, Asp-170, Gly-183, and Asn-280 contribute to the substrate site; that span reads LVSGG. Residue Asp-308 coordinates Fe cation.

This sequence belongs to the KAE1 / TsaD family. The cofactor is Fe(2+).

The protein resides in the cytoplasm. The catalysed reaction is L-threonylcarbamoyladenylate + adenosine(37) in tRNA = N(6)-L-threonylcarbamoyladenosine(37) in tRNA + AMP + H(+). Its function is as follows. Required for the formation of a threonylcarbamoyl group on adenosine at position 37 (t(6)A37) in tRNAs that read codons beginning with adenine. Is involved in the transfer of the threonylcarbamoyl moiety of threonylcarbamoyl-AMP (TC-AMP) to the N6 group of A37, together with TsaE and TsaB. TsaD likely plays a direct catalytic role in this reaction. The sequence is that of tRNA N6-adenosine threonylcarbamoyltransferase from Paracoccus denitrificans (strain Pd 1222).